A 395-amino-acid chain; its full sequence is NAD(P)H-quinone oxidoreductase subunit H (395 aa).

Belongs to the complex I 49 kDa subunit family. In terms of assembly, NDH-1 can be composed of about 15 different subunits; different subcomplexes with different compositions have been identified which probably have different functions.

The protein resides in the cellular thylakoid membrane. It catalyses the reaction a plastoquinone + NADH + (n+1) H(+)(in) = a plastoquinol + NAD(+) + n H(+)(out). The catalysed reaction is a plastoquinone + NADPH + (n+1) H(+)(in) = a plastoquinol + NADP(+) + n H(+)(out). Its function is as follows. NDH-1 shuttles electrons from an unknown electron donor, via FMN and iron-sulfur (Fe-S) centers, to quinones in the respiratory and/or the photosynthetic chain. The immediate electron acceptor for the enzyme in this species is believed to be plastoquinone. Couples the redox reaction to proton translocation, and thus conserves the redox energy in a proton gradient. Cyanobacterial NDH-1 also plays a role in inorganic carbon-concentration. This chain is NAD(P)H-quinone oxidoreductase subunit H, found in Prochlorococcus marinus (strain MIT 9301).